The chain runs to 279 residues: Estrogen receptor beta (279 aa).

Residues 27–261 (SPEQLVLTLL…DLLLEMLNAH (235 aa)) form the NR LBD domain.

The protein belongs to the nuclear hormone receptor family. NR3 subfamily. In terms of assembly, binds DNA as a homodimer. Can form a heterodimer with ESR1. Interacts with NCOA1, NCOA3, NCOA5 and NCOA6 coactivators, leading to a strong increase of transcription of target genes. Interacts with UBE1C and AKAP13. Interacts with DNTTIP2. Interacts with CCDC62 in the presence of estradiol/E2; this interaction seems to enhance the transcription of target genes. Interacts with DNAAF4. Interacts with PRMT2. Interacts with CCAR2 (via N-terminus) in a ligand-independent manner. Interacts with RBM39, in the presence of estradiol (E2). Interacts with STUB1/CHIP.

Its subcellular location is the nucleus. Nuclear hormone receptor. Binds estrogens with an affinity similar to that of ESR1/ER-alpha, and activates expression of reporter genes containing estrogen response elements (ERE) in an estrogen-dependent manner. This chain is Estrogen receptor beta (ESR2), found in Macaca mulatta (Rhesus macaque).